Here is a 306-residue protein sequence, read N- to C-terminus: Low density lipoprotein receptor adapter protein 1 (306 aa).

Met1 bears the N-acetylmethionine mark. Ser14 bears the Phosphoserine mark. The region spanning 44–168 is the PID domain; it reads GMVFSLKYLG…VAQAFKVAFE (125 aa). The interval 178–204 is disordered; it reads EKREKANQEGGDVPGTRRDSTPSLKTS. 2 positions are modified to phosphoserine: Ser197 and Ser200. A Clathrin box motif is present at residues 210–214; that stretch reads LLDLE. Residues 247–274 are AP-2 complex binding; the sequence is WELDDGLDEAFSRLAQSRTNPQVLDTGL. The short motif at 255–264 is the [DE]-X(1,2)-F-X-X-[FL]-X-X-X-R motif element; that stretch reads EAFSRLAQSR.

In terms of assembly, interacts (via PID domain) with LDLR (via NPXY motifs). Binds to soluble clathrin trimers. Interacts with AP2B1; the interaction mediates the association with the AP-2 complex. Interacts with VLDLR. Interacts with LRP2.

The protein localises to the cytoplasm. In terms of biological role, adapter protein (clathrin-associated sorting protein (CLASP)) required for efficient endocytosis of the LDL receptor (LDLR) in polarized cells such as hepatocytes and lymphocytes, but not in non-polarized cells (fibroblasts). May be required for LDL binding and internalization but not for receptor clustering in coated pits. May facilitate the endocytosis of LDLR and LDLR-LDL complexes from coated pits by stabilizing the interaction between the receptor and the structural components of the pits. May also be involved in the internalization of other LDLR family members. Binds to phosphoinositides, which regulate clathrin bud assembly at the cell surface. Required for trafficking of LRP2 to the endocytic recycling compartment which is necessary for LRP2 proteolysis, releasing a tail fragment which translocates to the nucleus and mediates transcriptional repression. This is Low density lipoprotein receptor adapter protein 1 from Rattus norvegicus (Rat).